The sequence spans 317 residues: tRNA dimethylallyltransferase (317 aa).

19 to 26 (GPTASGKS) serves as a coordination point for ATP. 21-26 (TASGKS) contacts substrate. Residues 44–47 (DSMQ) form an interaction with substrate tRNA region.

The protein belongs to the IPP transferase family. In terms of assembly, monomer. The cofactor is Mg(2+).

It catalyses the reaction adenosine(37) in tRNA + dimethylallyl diphosphate = N(6)-dimethylallyladenosine(37) in tRNA + diphosphate. Catalyzes the transfer of a dimethylallyl group onto the adenine at position 37 in tRNAs that read codons beginning with uridine, leading to the formation of N6-(dimethylallyl)adenosine (i(6)A). This chain is tRNA dimethylallyltransferase, found in Methylorubrum extorquens (strain CM4 / NCIMB 13688) (Methylobacterium extorquens).